Consider the following 301-residue polypeptide: tRNA dimethylallyltransferase 1 (301 aa).

Gly10–Thr17 is an ATP binding site. Residue Thr12–Thr17 participates in substrate binding. The segment at Asp35–Gln38 is interaction with substrate tRNA.

Belongs to the IPP transferase family. Monomer. It depends on Mg(2+) as a cofactor.

It catalyses the reaction adenosine(37) in tRNA + dimethylallyl diphosphate = N(6)-dimethylallyladenosine(37) in tRNA + diphosphate. Functionally, catalyzes the transfer of a dimethylallyl group onto the adenine at position 37 in tRNAs that read codons beginning with uridine, leading to the formation of N6-(dimethylallyl)adenosine (i(6)A). The protein is tRNA dimethylallyltransferase 1 of Geotalea uraniireducens (strain Rf4) (Geobacter uraniireducens).